Consider the following 356-residue polypeptide: Zinc finger CW-type PWWP domain protein 2 (356 aa).

The segment at 24 to 79 adopts a CW-type zinc-finger fold; it reads MYVNKVWVQCENENCLKWRLLSSEDSAKVDHDEPWYCFMNTDSRYNNCSISEEDFP. Residues cysteine 33, cysteine 38, cysteine 60, and cysteine 71 each coordinate Zn(2+). Residues 98–162 form the PWWP domain; it reads LGSLVLVKLQ…ATFVGHYSIT (65 aa). The interval 279–307 is disordered; that stretch reads QALQPTATPDESEEGHGEEINMGEKLSKC.

In terms of biological role, histone methylation reader which binds to non-methylated (H3K4me0), monomethylated (H3K4me1), dimethylated (H3K4me2) and trimethylated (H3K4me3) 'Lys-4' on histone H3. The order of binding preference is H3K4me3 &gt; H3K4me2 &gt; H3K4me1 &gt; H3K4me0. In Homo sapiens (Human), this protein is Zinc finger CW-type PWWP domain protein 2 (ZCWPW2).